Here is a 309-residue protein sequence, read N- to C-terminus: p-hydroxybenzoic acid efflux pump subunit AaeA (309 aa).

The chain crosses the membrane as a helical span at residues 12–32; it reads AITVVLVILAFIAIFNAWVYY.

The protein belongs to the membrane fusion protein (MFP) (TC 8.A.1) family.

Its subcellular location is the cell inner membrane. In terms of biological role, forms an efflux pump with AaeB. The polypeptide is p-hydroxybenzoic acid efflux pump subunit AaeA (Escherichia coli O157:H7).